The following is a 41-amino-acid chain: Hemoglobin subunit beta (41 aa).

A Globin domain is found at 1-41 (LGNVLVCVLAHHFGKEFTPQVQAAYQKVVAGVANALAHKYH). An N6-acetyllysine modification is found at lysine 39.

Belongs to the globin family. As to quaternary structure, heterotetramer of two alpha chains and two beta chains. Red blood cells.

Its function is as follows. Involved in oxygen transport from the lung to the various peripheral tissues. In Colobus guereza (Mantled guereza), this protein is Hemoglobin subunit beta (HBB).